A 113-amino-acid chain; its full sequence is U11-theraphotoxin-Hhn1a (113 aa).

Positions 1-21 (MNTVRVTFLLVFVLAVSLGQT) are cleaved as a signal peptide. A propeptide spanning residues 22–74 (DKDENRMEMQEKTEQGKSYLDFAENLLLQKLEELEAKLLEEDSEESRNSRQKR) is cleaved from the precursor. Intrachain disulfides connect cysteine 75/cysteine 90, cysteine 82/cysteine 95, and cysteine 89/cysteine 110.

Belongs to the neurotoxin 14 (magi-1) family. 01 (HNTX-16) subfamily. In terms of tissue distribution, expressed by the venom gland.

The protein resides in the secreted. Functionally, probable ion channel inhibitor. The protein is U11-theraphotoxin-Hhn1a of Cyriopagopus hainanus (Chinese bird spider).